The following is a 432-amino-acid chain: Homogentisate 1,2-dioxygenase (432 aa).

The active-site Proton acceptor is histidine 286. The Fe cation site is built by histidine 329 and glutamate 335. Tyrosine 344 and histidine 365 together coordinate homogentisate. Residue histidine 365 participates in Fe cation binding.

This sequence belongs to the homogentisate dioxygenase family. In terms of assembly, hexamer; dimer of trimers. Requires Fe cation as cofactor.

It catalyses the reaction homogentisate + O2 = 4-maleylacetoacetate + H(+). The protein operates within amino-acid degradation; L-phenylalanine degradation; acetoacetate and fumarate from L-phenylalanine: step 4/6. Involved in the catabolism of homogentisate (2,5-dihydroxyphenylacetate or 2,5-OH-PhAc), a central intermediate in the degradation of phenylalanine and tyrosine. Catalyzes the oxidative ring cleavage of the aromatic ring of homogentisate to yield maleylacetoacetate. This is Homogentisate 1,2-dioxygenase from Bordetella bronchiseptica (strain ATCC BAA-588 / NCTC 13252 / RB50) (Alcaligenes bronchisepticus).